A 106-amino-acid chain; its full sequence is ATP synthase-coupling factor 6, mitochondrial (106 aa).

The protein belongs to the eukaryotic ATPase subunit F6 family. F-type ATPases have 2 components, CF(1) - the catalytic core - and CF(0) - the membrane proton channel. CF(0) seems to have nine subunits: a, b, c, d, e, f, g, F6 and 8 (or A6L).

The protein localises to the mitochondrion. It localises to the mitochondrion inner membrane. Mitochondrial membrane ATP synthase (F(1)F(0) ATP synthase or Complex V) produces ATP from ADP in the presence of a proton gradient across the membrane which is generated by electron transport complexes of the respiratory chain. F-type ATPases consist of two structural domains, F(1) - containing the extramembraneous catalytic core and F(0) - containing the membrane proton channel, linked together by a central stalk and a peripheral stalk. During catalysis, ATP synthesis in the catalytic domain of F(1) is coupled via a rotary mechanism of the central stalk subunits to proton translocation. Part of the complex F(0) domain and the peripheric stalk, which acts as a stator to hold the catalytic alpha(3)beta(3) subcomplex and subunit a/ATP6 static relative to the rotary elements. The polypeptide is ATP synthase-coupling factor 6, mitochondrial (Drosophila melanogaster (Fruit fly)).